The following is a 367-amino-acid chain: Flagellar P-ring protein (367 aa).

The signal sequence occupies residues 1-22 (MRRMLVIRWILAIHLIATQVFA).

This sequence belongs to the FlgI family. In terms of assembly, the basal body constitutes a major portion of the flagellar organelle and consists of four rings (L,P,S, and M) mounted on a central rod.

It is found in the periplasm. The protein resides in the bacterial flagellum basal body. Assembles around the rod to form the L-ring and probably protects the motor/basal body from shearing forces during rotation. The chain is Flagellar P-ring protein from Legionella pneumophila (strain Lens).